The chain runs to 839 residues: Flocculation protein FLO11 (839 aa).

The first 22 residues, 1–22, serve as a signal peptide directing secretion; that stretch reads MVSLRSIFTSSILAAGLTRAHG. In terms of domain architecture, Flo11 1 spans 24 to 194; it reads SGKTCPTSEV…PKKCSSDCGV (171 aa). 4 disulfides stabilise this stretch: Cys-28-Cys-188, Cys-37-Cys-167, Cys-129-Cys-192, and Cys-143-Cys-152. Residue Asn-79 is glycosylated (N-linked (GlcNAc...) asparagine). The interval 187-342 is disordered; it reads KCSSDCGVEP…GPTCPTSEVS (156 aa). Residues 198–317 are compositionally biased toward acidic residues; that stretch reads TSDEPEEPTT…EPTTSEEPEE (120 aa). In terms of domain architecture, Flo11 2 spans 332 to 502; it reads EGPTCPTSEV…PKKCSSNCGV (171 aa). The N-linked (GlcNAc...) asparagine glycan is linked to Asn-387. The interval 496-606 is disordered; the sequence is CSSNCGVEPT…LVPTTKTETD (111 aa). Residues 506 to 592 are compositionally biased toward acidic residues; that stretch reads TSDEPEEPTT…PTTSDEEPGT (87 aa). Positions 593 to 606 are enriched in low complexity; that stretch reads TEEPLVPTTKTETD.

It belongs to the flocculin family. Highly divergent.

Its function is as follows. Homophilic binding protein that enables kin discrimination in heterogeneous yeast populations by mediating homotypic cell-cell interactions during flocculation, a reversible and asexual process in which cells adhere to form aggregates (flocs). This is Flocculation protein FLO11 from Komagataella phaffii (strain GS115 / ATCC 20864) (Yeast).